A 126-amino-acid chain; its full sequence is Glycerol dehydrogenase small subunit (126 aa).

The next 4 helical transmembrane spans lie at 13 to 33 (WLTL…VIAG), 41 to 61 (GSVY…FMLM), 67 to 87 (AFLY…EVGF), and 92 to 112 (LLPR…TIPV).

It localises to the cell membrane. The catalysed reaction is glycerol + A = dihydroxyacetone + AH2. Its function is as follows. Catalyzes the oxidation of glycerol to glycerone. Also acts, more slowly, on a number of other polyols including D-sorbitol, D-arabinitol, D-mannitol, meso-erythritol, adonitol and propylene glycol. The sequence is that of Glycerol dehydrogenase small subunit (sldB) from Gluconobacter oxydans (strain 621H) (Gluconobacter suboxydans).